Here is a 586-residue protein sequence, read N- to C-terminus: Arginine--tRNA ligase (586 aa).

The short motif at 128 to 138 is the 'HIGH' region element; the sequence is ANPTGPLHVGH.

The protein belongs to the class-I aminoacyl-tRNA synthetase family. As to quaternary structure, monomer.

The protein localises to the cytoplasm. It catalyses the reaction tRNA(Arg) + L-arginine + ATP = L-arginyl-tRNA(Arg) + AMP + diphosphate. The sequence is that of Arginine--tRNA ligase from Legionella pneumophila (strain Corby).